We begin with the raw amino-acid sequence, 159 residues long: 2-C-methyl-D-erythritol 2,4-cyclodiphosphate synthase (159 aa).

A divalent metal cation-binding residues include Asp8 and His10. 4-CDP-2-C-methyl-D-erythritol 2-phosphate is bound by residues 8–10 (DSH) and 34–35 (HS). His42 lines the a divalent metal cation pocket. 4-CDP-2-C-methyl-D-erythritol 2-phosphate is bound by residues 56-58 (DIG), 61-65 (FPDSD), Phe139, and Arg142.

Belongs to the IspF family. As to quaternary structure, homotrimer. A divalent metal cation is required as a cofactor.

The catalysed reaction is 4-CDP-2-C-methyl-D-erythritol 2-phosphate = 2-C-methyl-D-erythritol 2,4-cyclic diphosphate + CMP. It functions in the pathway isoprenoid biosynthesis; isopentenyl diphosphate biosynthesis via DXP pathway; isopentenyl diphosphate from 1-deoxy-D-xylulose 5-phosphate: step 4/6. Involved in the biosynthesis of isopentenyl diphosphate (IPP) and dimethylallyl diphosphate (DMAPP), two major building blocks of isoprenoid compounds. Catalyzes the conversion of 4-diphosphocytidyl-2-C-methyl-D-erythritol 2-phosphate (CDP-ME2P) to 2-C-methyl-D-erythritol 2,4-cyclodiphosphate (ME-CPP) with a corresponding release of cytidine 5-monophosphate (CMP). The chain is 2-C-methyl-D-erythritol 2,4-cyclodiphosphate synthase from Syntrophus aciditrophicus (strain SB).